The primary structure comprises 180 residues: MQNSPWFKENPLRLFITGRPGVGKTTLIKGLVSELRELKIAGFYTEEVRERGERTGFLFVVIGDGSCPLASTKPIGKERVGRYFVVDSLTLLPQVKQRLEVADLVIMDEIGPMEKKIGDLWKLIQGVLSSNKPVVASVHRSMNIEGKRYELTPVNRDRVREDILNEIRRYFGTKQDTFSL.

ATP is bound by residues 18–25 and 104–111; these read GRPGVGKT and LVIMDEIG.

It belongs to the THEP1 NTPase family.

The catalysed reaction is a ribonucleoside 5'-triphosphate + H2O = a ribonucleoside 5'-diphosphate + phosphate + H(+). In terms of biological role, has nucleotide phosphatase activity towards ATP, GTP, CTP, TTP and UTP. May hydrolyze nucleoside diphosphates with lower efficiency. The sequence is that of Nucleoside-triphosphatase THEP1 from Metallosphaera sedula (strain ATCC 51363 / DSM 5348 / JCM 9185 / NBRC 15509 / TH2).